We begin with the raw amino-acid sequence, 117 residues long: NADH-ubiquinone oxidoreductase chain 3 (117 aa).

Transmembrane regions (helical) follow at residues Ile-6 to Ile-26, Phe-58 to Trp-78, and Leu-85 to Ile-105.

This sequence belongs to the complex I subunit 3 family.

Its subcellular location is the mitochondrion membrane. The enzyme catalyses a ubiquinone + NADH + 5 H(+)(in) = a ubiquinol + NAD(+) + 4 H(+)(out). Functionally, core subunit of the mitochondrial membrane respiratory chain NADH dehydrogenase (Complex I) that is believed to belong to the minimal assembly required for catalysis. Complex I functions in the transfer of electrons from NADH to the respiratory chain. The immediate electron acceptor for the enzyme is believed to be ubiquinone. This chain is NADH-ubiquinone oxidoreductase chain 3 (ND3), found in Sarcophyton glaucum (Toadstool umbrella leather coral).